Consider the following 175-residue polypeptide: General stress protein 14 (175 aa).

Belongs to the NAD(P)H dehydrogenase (quinone) family.

This chain is General stress protein 14 (ywrO), found in Bacillus subtilis (strain 168).